Reading from the N-terminus, the 466-residue chain is Lipase 2 (466 aa).

Residues 1 to 16 (MKGLVFLLGLLPTIYA) form the signal peptide. Cysteines 112 and 285 form a disulfide. Ser-196 (charge relay system) is an active-site residue. Asn-231, Asn-319, and Asn-331 each carry an N-linked (GlcNAc...) asparagine glycan. Catalysis depends on charge relay system residues Asp-348 and His-381. A disulfide bond links Cys-364 and Cys-409. Residues Asn-422 and Asn-451 are each glycosylated (N-linked (GlcNAc...) asparagine).

Belongs to the AB hydrolase superfamily. Lipase family. Class Lip subfamily.

It localises to the secreted. It catalyses the reaction a triacylglycerol + H2O = a diacylglycerol + a fatty acid + H(+). Its function is as follows. Secreted lipase that is able to hydrolyze both the neutral triacylglycerols and the monopalmitate ester Tween 40, allowing the use of hydrolyzed products as carbon sources. Has broad lipolytic activity, which may be important for colonization and subsequent infection, therefore contributing to the persistence and virulence in human tissue. My be important for alimentary tract colonization, but not oral infection. Facilitates invasive disease via lipid-based suppression of the IL-17 response. Inhibits IL-17 production indirectly by suppressing IL-23 production by tissue-resident dendritic cells. This Candida albicans (strain SC5314 / ATCC MYA-2876) (Yeast) protein is Lipase 2.